Consider the following 32-residue polypeptide: Yop proteins translocation protein A (32 aa).

The polypeptide is Yop proteins translocation protein A (yscA) (Yersinia enterocolitica serotype O:8 / biotype 1B (strain NCTC 13174 / 8081)).